Consider the following 324-residue polypeptide: Glyoxylate/hydroxypyruvate reductase B (324 aa).

Catalysis depends on residues Arg237 and Glu266. His285 (proton donor) is an active-site residue.

The protein belongs to the D-isomer specific 2-hydroxyacid dehydrogenase family. GhrB subfamily. As to quaternary structure, homodimer.

The protein localises to the cytoplasm. The enzyme catalyses glycolate + NADP(+) = glyoxylate + NADPH + H(+). It catalyses the reaction (R)-glycerate + NAD(+) = 3-hydroxypyruvate + NADH + H(+). It carries out the reaction (R)-glycerate + NADP(+) = 3-hydroxypyruvate + NADPH + H(+). Catalyzes the NADPH-dependent reduction of glyoxylate and hydroxypyruvate into glycolate and glycerate, respectively. The polypeptide is Glyoxylate/hydroxypyruvate reductase B (Salmonella choleraesuis (strain SC-B67)).